The chain runs to 336 residues: tRNA(Ile)-lysidine synthase (336 aa).

40-45 (SGGQDS) provides a ligand contact to ATP.

Belongs to the tRNA(Ile)-lysidine synthase family.

It localises to the cytoplasm. It carries out the reaction cytidine(34) in tRNA(Ile2) + L-lysine + ATP = lysidine(34) in tRNA(Ile2) + AMP + diphosphate + H(+). Its function is as follows. Ligates lysine onto the cytidine present at position 34 of the AUA codon-specific tRNA(Ile) that contains the anticodon CAU, in an ATP-dependent manner. Cytidine is converted to lysidine, thus changing the amino acid specificity of the tRNA from methionine to isoleucine. The chain is tRNA(Ile)-lysidine synthase from Prochlorococcus marinus subsp. pastoris (strain CCMP1986 / NIES-2087 / MED4).